The primary structure comprises 130 residues: VARSWVCRKTYVTPRRPFEKSRLDQELKLIGEYGLRNKREVWRVKFTLAKIRKAARELLTLDEKDPRRLFEGNALLRRLVRIGVLDEGKMKLDYILGLKIEDFLERRLQTQVFKLGLAXSIHHXRVLIRQ.

Lysine 64 carries the N6-acetyllysine modification. Residue lysine 91 forms a Glycyl lysine isopeptide (Lys-Gly) (interchain with G-Cter in SUMO2) linkage. Residues 106-130 enclose the S4 RNA-binding domain; sequence RRLQTQVFKLGLAXSIHHXRVLIRQ. The residue at position 114 (lysine 114) is an N6-acetyllysine.

It belongs to the universal ribosomal protein uS4 family. As to quaternary structure, component of the small ribosomal subunit. Identified in a IGF2BP1-dependent mRNP granule complex containing untranslated mRNAs. Part of the small subunit (SSU) processome, composed of more than 70 proteins and the RNA chaperone small nucleolar RNA (snoRNA) U3.

The protein localises to the cytoplasm. The protein resides in the nucleus. It is found in the nucleolus. Component of the small ribosomal subunit. The ribosome is a large ribonucleoprotein complex responsible for the synthesis of proteins in the cell. Part of the small subunit (SSU) processome, first precursor of the small eukaryotic ribosomal subunit. During the assembly of the SSU processome in the nucleolus, many ribosome biogenesis factors, an RNA chaperone and ribosomal proteins associate with the nascent pre-rRNA and work in concert to generate RNA folding, modifications, rearrangements and cleavage as well as targeted degradation of pre-ribosomal RNA by the RNA exosome. The protein is Small ribosomal subunit protein uS4 (RPS9) of Sus scrofa (Pig).